The sequence spans 144 residues: Eukaryotic translation initiation factor 1A, Y-chromosomal (144 aa).

Residues 1–15 are compositionally biased toward basic residues; that stretch reads MPKNKGKGGKNRRRG. Residues 1 to 26 are disordered; that stretch reads MPKNKGKGGKNRRRGKNENESEKREL. The segment covering 16–26 has biased composition (basic and acidic residues); sequence KNENESEKREL. The S1-like domain maps to 22–96; that stretch reads EKRELVFKED…NKADVILKYN (75 aa). A Glycyl lysine isopeptide (Lys-Gly) (interchain with G-Cter in ubiquitin) cross-link involves residue K88. Residues 114 to 144 are disordered; sequence KINETDTFGPGDDDEVQFDDIGDDDEDIDDI. The segment covering 124-144 has biased composition (acidic residues); that stretch reads GDDDEVQFDDIGDDDEDIDDI.

It belongs to the eIF-1A family. Component of the 43S pre-initiation complex (43S PIC), which is composed of the 40S ribosomal subunit, EIF1, eIF1A (EIF1AX), eIF3 complex, EIF5 and eIF2-GTP-initiator tRNA complex (eIF2 ternary complex). Interacts with EIF5; this interaction contributes to the maintenance of EIF1 within the open 43S PIC. Interacts through its C-terminal domain (CTD) with the CTD of EIF5B; from the location of the start codon by the 43S complex until the formation of the 80S complex. Ubiquitous.

It localises to the cytoplasm. Component of the 43S pre-initiation complex (43S PIC), which binds to the mRNA cap-proximal region, scans mRNA 5'-untranslated region, and locates the initiation codon. This protein enhances formation of the cap-proximal complex. Together with EIF1, facilitates scanning, start codon recognition, promotion of the assembly of 48S complex at the initiation codon (43S PIC becomes 48S PIC after the start codon is reached), and dissociation of aberrant complexes. After start codon location, together with EIF5B orients the initiator methionine-tRNA in a conformation that allows 60S ribosomal subunit joining to form the 80S initiation complex. Is released after 80S initiation complex formation, just after GTP hydrolysis by EIF5B, and before release of EIF5B. Its globular part is located in the A site of the 40S ribosomal subunit. Its interaction with EIF5 during scanning contribute to the maintenance of EIF1 within the open 43S PIC. In contrast to yeast orthologs, does not bind EIF1. This Pan troglodytes (Chimpanzee) protein is Eukaryotic translation initiation factor 1A, Y-chromosomal (EIF1AY).